Reading from the N-terminus, the 232-residue chain is Ribonuclease 3 (232 aa).

In terms of domain architecture, RNase III spans 5 to 134 (QTVLKNHFAI…FLGALLLDKD (130 aa)). Glu-47 contacts Mg(2+). Asp-51 is a catalytic residue. Residues Asp-120 and Glu-123 each coordinate Mg(2+). Glu-123 is an active-site residue. The 70-residue stretch at 160–229 (DYKTHLQELL…AKNAVEKGLD (70 aa)) folds into the DRBM domain.

Belongs to the ribonuclease III family. As to quaternary structure, homodimer. Mg(2+) serves as cofactor.

It is found in the cytoplasm. It catalyses the reaction Endonucleolytic cleavage to 5'-phosphomonoester.. Functionally, digests double-stranded RNA. Involved in the processing of primary rRNA transcript to yield the immediate precursors to the large and small rRNAs (23S and 16S). Processes some mRNAs, and tRNAs when they are encoded in the rRNA operon. Processes pre-crRNA and tracrRNA of type II CRISPR loci if present in the organism. This chain is Ribonuclease 3, found in Streptococcus pneumoniae (strain CGSP14).